We begin with the raw amino-acid sequence, 326 residues long: F-box/LRR-repeat protein 12 (326 aa).

Residues 1-47 (MATLVELPDSVLLEIFSYLPVRDRIRISRVCHRWKRLVDDRWLWRHV) enclose the F-box domain. LRR repeat units lie at residues 51 to 78 (LYTM…RMGG), 86 to 111 (APQL…CLHV), 113 to 133 (DLSM…ELHS), 161 to 185 (VPAF…VLGG), 186 to 211 (TYRV…EVLG), 212 to 236 (CTLS…IRLT), 237 to 261 (VRGL…CLQG), and 266 to 291 (PEMP…ELQG).

Interacts with SKP1 and CUL1.

It functions in the pathway protein modification; protein ubiquitination. Substrate-recognition component of the SCF (SKP1-CUL1-F-box protein)-type E3 ubiquitin ligase complex. Mediates the polyubiquitination and proteasomal degradation of CAMK1 leading to disruption of cyclin D1/CDK4 complex assembly which results in G1 cell cycle arrest in lung epithelia. The sequence is that of F-box/LRR-repeat protein 12 (FBXL12) from Homo sapiens (Human).